A 410-amino-acid chain; its full sequence is S-adenosylmethionine synthase (410 aa).

His-21 serves as a coordination point for ATP. Asp-23 contacts Mg(2+). Residue Glu-49 coordinates K(+). L-methionine-binding residues include Glu-62 and Gln-105. The interval 105-115 (QSQEIGAGVDQ) is flexible loop. Residues 107-133 (QEIGAGVDQSHEVRSGENTDADDQAGA) form a disordered region. ATP contacts are provided by residues 180 to 182 (DGK), Asp-261, 267 to 268 (RK), Ala-284, and Lys-288. Position 261 (Asp-261) interacts with L-methionine. Lys-292 contacts L-methionine.

Belongs to the AdoMet synthase family. In terms of assembly, homotetramer; dimer of dimers. Mg(2+) serves as cofactor. The cofactor is K(+).

It is found in the cytoplasm. The catalysed reaction is L-methionine + ATP + H2O = S-adenosyl-L-methionine + phosphate + diphosphate. The protein operates within amino-acid biosynthesis; S-adenosyl-L-methionine biosynthesis; S-adenosyl-L-methionine from L-methionine: step 1/1. Functionally, catalyzes the formation of S-adenosylmethionine (AdoMet) from methionine and ATP. The overall synthetic reaction is composed of two sequential steps, AdoMet formation and the subsequent tripolyphosphate hydrolysis which occurs prior to release of AdoMet from the enzyme. The polypeptide is S-adenosylmethionine synthase (Corynebacterium diphtheriae (strain ATCC 700971 / NCTC 13129 / Biotype gravis)).